We begin with the raw amino-acid sequence, 776 residues long: Microtubule-associated protein tau (776 aa).

Over residues methionine 1 to glutamine 26 the composition is skewed to basic and acidic residues. The tract at residues methionine 1–valine 591 is disordered. Position 2 is an N-acetylalanine (alanine 2). Phosphotyrosine is present on residues tyrosine 18 and tyrosine 29. Lysine 44 is covalently cross-linked (Glycyl lysine isopeptide (Lys-Gly) (interchain with G-Cter in ubiquitin)). 2 positions are modified to phosphoserine: serine 46 and serine 61. Residues serine 61–threonine 71 show a composition bias toward polar residues. A phosphothreonine mark is found at threonine 69, threonine 71, and threonine 111. 2 stretches are compositionally biased toward basic and acidic residues: residues glutamate 179 to lysine 189 and glycine 207 to glutamate 216. Residues glutamate 217–serine 228 are compositionally biased toward acidic residues. A compositionally biased stretch (basic and acidic residues) spans glutamate 314–glycine 323. A compositionally biased stretch (low complexity) spans alanine 325–proline 340. Composition is skewed to basic and acidic residues over residues glutamate 344–glutamate 356 and lysine 381–alanine 393. The segment covering valine 442 to glycine 453 has biased composition (low complexity). Over residues lysine 455–threonine 466 the composition is skewed to basic and acidic residues. Threonine 470 is modified (phosphothreonine). Arginine 472 carries the omega-N-methylarginine modification. Position 480 is an N6,N6-dimethyllysine; alternate (lysine 480). Lysine 480 bears the N6-acetyllysine; alternate mark. 3 positions are modified to phosphothreonine: threonine 486, threonine 492, and threonine 498. Serine 502, serine 526, and serine 530 each carry phosphoserine. Residues lysine 517 to aspartate 528 are compositionally biased toward basic and acidic residues. The segment covering arginine 529–serine 549 has biased composition (low complexity). Tyrosine 532 carries the post-translational modification Phosphotyrosine. Serine 533, serine 534, and serine 537 each carry phosphoserine. Phosphothreonine occurs at positions 540 and 547. At serine 549 the chain carries Phosphoserine. Residue threonine 552 is modified to Phosphothreonine. Lysine 560 carries the post-translational modification N6-acetyllysine. Position 566 is a phosphothreonine (threonine 566). 2 positions are modified to phosphoserine: serine 570 and serine 572. Tau/MAP repeat units lie at residues glutamine 579–lysine 609, valine 610–serine 640, valine 641–glutamine 671, and valine 672–asparagine 703. A Glycyl lysine isopeptide (Lys-Gly) (interchain with G-Cter in ubiquitin) cross-link involves residue lysine 589. At lysine 594 the chain carries N6-acetyllysine; alternate. The residue at position 594 (lysine 594) is an N6-methyllysine; alternate. Residue lysine 594 forms a Glycyl lysine isopeptide (Lys-Gly) (interchain with G-Cter in ubiquitin); alternate linkage. A Phosphoserine modification is found at serine 597. A Glycyl lysine isopeptide (Lys-Gly) (interchain with G-Cter in ubiquitin) cross-link involves residue lysine 602. Lysine 616 carries the N6-acetyllysine; alternate modification. Lysine 616 is covalently cross-linked (Glycyl lysine isopeptide (Lys-Gly) (interchain with G-Cter in ubiquitin); alternate). Serine 620 and serine 624 each carry phosphoserine. An N6-acetyllysine modification is found at lysine 625. Serine 628 is modified (phosphoserine). Lysine 633 carries the N6-acetyllysine; alternate modification. Lysine 633 is covalently cross-linked (Glycyl lysine isopeptide (Lys-Gly) (interchain with G-Cter in ubiquitin); alternate). Phosphoserine is present on serine 640. An N6,N6-dimethyllysine; alternate modification is found at lysine 646. N6-acetyllysine; alternate occurs at positions 646, 652, and 656. Glycyl lysine isopeptide (Lys-Gly) (interchain with G-Cter in ubiquitin); alternate cross-links involve residues lysine 646, lysine 652, and lysine 656. At serine 659 the chain carries Phosphoserine. An N6-acetyllysine; alternate mark is found at lysine 666, lysine 678, and lysine 682. Residues lysine 666, lysine 678, and lysine 682 each participate in a glycyl lysine isopeptide (Lys-Gly) (interchain with G-Cter in ubiquitin); alternate cross-link. Arginine 684 carries the post-translational modification Omega-N-methylarginine. Serine 687 carries the post-translational modification Phosphoserine. Lysine 688 participates in a covalent cross-link: Glycyl lysine isopeptide (Lys-Gly) (interchain with G-Cter in ubiquitin). Serine 691 carries the post-translational modification Phosphoserine. N6-acetyllysine; alternate is present on lysine 704. Residue lysine 704 forms a Glycyl lysine isopeptide (Lys-Gly) (interchain with G-Cter in ubiquitin); alternate linkage. Residue lysine 710 forms a Glycyl lysine isopeptide (Lys-Gly) (interchain with G-Cter in ubiquitin) linkage. Lysine 720 carries the N6-acetyllysine; alternate modification. Residue lysine 720 forms a Glycyl lysine isopeptide (Lys-Gly) (interchain with G-Cter in ubiquitin); alternate linkage. Tyrosine 729 bears the Phosphotyrosine mark. Residues serine 731 and serine 735 each carry the phosphoserine modification. The disordered stretch occupies residues valine 733 to isoleucine 752. Over residues glycine 736–serine 751 the composition is skewed to polar residues. Threonine 738 is modified (phosphothreonine). 4 positions are modified to phosphoserine: serine 739, serine 744, serine 751, and serine 757. Threonine 762 is modified (phosphothreonine).

As to quaternary structure, interacts with MARK1, MARK2, MARK3 and MARK4. Interacts with SQSTM1 when polyubiquitinated. Interacts with PSMC2 through SQSTM1. Interacts with FKBP4. Binds to CSNK1D. Interacts with SGK1. Interacts with EPM2A; the interaction dephosphorylates MAPT at Ser-396. Interacts with PIN1. Interacts with LRRK2. Interacts with LRP1, leading to endocytosis; this interaction is reduced in the presence of LRPAP1/RAP. Post-translationally, polyubiquitinated. Requires functional TRAF6 and may provoke SQSTM1-dependent degradation by the proteasome. In terms of processing, phosphorylation at various serine and threonine residues in S-P or T-P motifs by proline-directed protein kinases (PDPK1, CDK1, CDK5, GSK3, MAPK) (a few sites per protein in interphase, more in mitosis), and at serine residues in K-X-G-S motifs by MAP/microtubule affinity-regulating kinase (MARK1, MARK2, MARK3 or MARK4), causing detachment from microtubules, and their disassembly. Phosphorylation at Ser-597 by BRSK1 and BRSK2 in neurons affects ability to bind microtubules and plays a role in neuron polarization. Phosphorylated by PHK. Dephosphorylation at several serine and threonine residues by the serine/threonine phosphatase PPP5C.

It localises to the cytoplasm. Its subcellular location is the cytosol. The protein resides in the cell membrane. It is found in the cytoskeleton. The protein localises to the cell projection. It localises to the axon. Its subcellular location is the dendrite. Promotes microtubule assembly and stability, and might be involved in the establishment and maintenance of neuronal polarity. The C-terminus binds axonal microtubules while the N-terminus binds neural plasma membrane components, suggesting that tau functions as a linker protein between both. Axonal polarity is predetermined by tau localization (in the neuronal cell) in the domain of the cell body defined by the centrosome. The short isoforms allow plasticity of the cytoskeleton whereas the longer isoforms may preferentially play a role in its stabilization. The chain is Microtubule-associated protein tau (MAPT) from Hylobates lar (Lar gibbon).